A 210-amino-acid polypeptide reads, in one-letter code: ATP-dependent Clp protease proteolytic subunit (210 aa).

Serine 107 acts as the Nucleophile in catalysis. Histidine 132 is an active-site residue.

It belongs to the peptidase S14 family. Fourteen ClpP subunits assemble into 2 heptameric rings which stack back to back to give a disk-like structure with a central cavity, resembling the structure of eukaryotic proteasomes.

Its subcellular location is the cytoplasm. It carries out the reaction Hydrolysis of proteins to small peptides in the presence of ATP and magnesium. alpha-casein is the usual test substrate. In the absence of ATP, only oligopeptides shorter than five residues are hydrolyzed (such as succinyl-Leu-Tyr-|-NHMec, and Leu-Tyr-Leu-|-Tyr-Trp, in which cleavage of the -Tyr-|-Leu- and -Tyr-|-Trp bonds also occurs).. Its function is as follows. Cleaves peptides in various proteins in a process that requires ATP hydrolysis. Has a chymotrypsin-like activity. Plays a major role in the degradation of misfolded proteins. In Azorhizobium caulinodans (strain ATCC 43989 / DSM 5975 / JCM 20966 / LMG 6465 / NBRC 14845 / NCIMB 13405 / ORS 571), this protein is ATP-dependent Clp protease proteolytic subunit.